A 334-amino-acid chain; its full sequence is Cytochrome c551 peroxidase (334 aa).

The first 26 residues, 1-26 (MIKRTLTVSLLSLSLGAMFASAGVMA), serve as a signal peptide directing secretion. Residues C65, C68, H69, C209, C212, H213, H270, and M284 each coordinate heme c. The interval 315 to 334 (FKLPILPPSNNDTPRSQPYE) is disordered. Residues 322-334 (PSNNDTPRSQPYE) show a composition bias toward polar residues.

Binds 2 heme c groups covalently per subunit.

It localises to the periplasm. It carries out the reaction 2 Fe(II)-[cytochrome c] + H2O2 + 2 H(+) = 2 Fe(III)-[cytochrome c] + 2 H2O. The sequence is that of Cytochrome c551 peroxidase (ccp) from Nitrosomonas europaea (strain ATCC 19718 / CIP 103999 / KCTC 2705 / NBRC 14298).